The sequence spans 393 residues: GTP exchange factor for ARFs 1 (393 aa).

Residues 1-12 (MSSRYSERNGLS) are compositionally biased toward polar residues. Residues 1–21 (MSSRYSERNGLSETEKMTLPK) form a disordered region. The stretch at 12 to 54 (SETEKMTLPKVRKRKAQLVDEIEALKNEVREVDEELDQVYYTH) forms a coiled coil. The 187-residue stretch at 53 to 239 (THPKSKEYHK…TEVYESVSVT (187 aa)) folds into the SEC7 domain. Positions 261–377 (HAEREGWLFK…MRSWINAISR (117 aa)) constitute a PH domain.

In terms of biological role, promotes guanine-nucleotide exchange on ARF. Promotes the activation of ARF through replacement of GDP with GTP. Plays a role in cell shedding during embryogenesis, probably by promoting the endocytosis of cell adhesion molecules. In Caenorhabditis elegans, this protein is GTP exchange factor for ARFs 1 (grp-1).